Consider the following 508-residue polypeptide: Photosystem II CP47 reaction center protein (508 aa).

Transmembrane regions (helical) follow at residues 21-36 (SVHI…WAGS), 101-115 (IVFS…IWHW), 140-156 (GIHL…SGAF), 203-218 (IAAG…FHLS), 237-252 (VLSS…AFIV), and 457-472 (TFAL…HGAR).

It belongs to the PsbB/PsbC family. PsbB subfamily. PSII is composed of 1 copy each of membrane proteins PsbA, PsbB, PsbC, PsbD, PsbE, PsbF, PsbH, PsbI, PsbJ, PsbK, PsbL, PsbM, PsbT, PsbX, PsbY, PsbZ, Psb30/Ycf12, at least 3 peripheral proteins of the oxygen-evolving complex and a large number of cofactors. It forms dimeric complexes. It depends on Binds multiple chlorophylls. PSII binds additional chlorophylls, carotenoids and specific lipids. as a cofactor.

Its subcellular location is the plastid. It is found in the chloroplast thylakoid membrane. In terms of biological role, one of the components of the core complex of photosystem II (PSII). It binds chlorophyll and helps catalyze the primary light-induced photochemical processes of PSII. PSII is a light-driven water:plastoquinone oxidoreductase, using light energy to abstract electrons from H(2)O, generating O(2) and a proton gradient subsequently used for ATP formation. This is Photosystem II CP47 reaction center protein from Cycas taitungensis (Prince sago).